The chain runs to 1184 residues: Protocadherin-12 (1184 aa).

The N-terminal stretch at 1 to 24 is a signal peptide; sequence MMQLLQLLLGLLGPGGYLFLLGDC. Residues 25–718 are Extracellular-facing; the sequence is QEVTTLTVKY…PGALSMSMLT (694 aa). Cadherin domains lie at 28-135, 136-244, 245-352, 355-460, and 461-565; these read TTLT…QPRF, PKGE…SPAF, AESS…IPSI, TWAS…APVF, and EKSR…APEV. Asparagine 415 is a glycosylation site (N-linked (GlcNAc...) asparagine). 3 N-linked (GlcNAc...) asparagine glycosylation sites follow: asparagine 582, asparagine 659, and asparagine 662. The Cadherin 6 domain occupies 600 to 711; it reads PAGTDTPPLA…LRDSARKPGA (112 aa). Residues 719–739 form a helical membrane-spanning segment; that stretch reads VICLAVLLGIFGLILALFMSI. Topologically, residues 740–1184 are cytoplasmic; sequence CRTEKKDNRA…RGSSSSSRCL (445 aa). Disordered regions lie at residues 854–928 and 973–1023; these read RQRN…ESGP and QFQP…DPEE. Serine 859 carries the post-translational modification Phosphoserine. Acidic residues predominate over residues 1012 to 1023; it reads PEQEEGPLDPEE. Phosphoserine is present on serine 1062. Residues 1153–1184 are disordered; it reads SAASGMKVQGDPGGKTGTEGKSRGSSSSSRCL. Positions 1175-1184 are enriched in low complexity; that stretch reads RGSSSSSRCL.

Cleaved by ADAM10 close to the transmembrane domain to release the Protocadherin-12, secreted form in the serum. Cleavage results in reduced cellular adhesion in a cell migration assay. Expressed in highly vascularized tissues including the heart and placenta, but most tissues contain a low level of expression. Prominent expression in the spleen. Present in villous and extravillous trophoblast (at protein level).

It is found in the cell membrane. The protein resides in the cell junction. Its subcellular location is the secreted. Cellular adhesion molecule that may play an important role in cell-cell interactions at interendothelial junctions. Acts as a regulator of cell migration, probably via increasing cell-cell adhesion. Promotes homotypic calcium-dependent aggregation and adhesion and clusters at intercellular junctions. Unable to bind to catenins, weakly associates with the cytoskeleton. In Homo sapiens (Human), this protein is Protocadherin-12.